The following is a 557-amino-acid chain: Hemolysin transporter protein ShlB (557 aa).

A signal peptide spans 1–18 (MIKKITALTLLVSTALSA). In terms of domain architecture, POTRA spans 79–152 (LPIAGVYLQG…GELGLSVTEG (74 aa)).

This sequence belongs to the TPS (TC 1.B.20) family.

The protein localises to the cell outer membrane. In terms of biological role, interacts with the cell-bound hemolysin. Necessary for the extracellular secretion and activation of hemolysin. Functionally, member of a two partner secretion pathway (TPS) in which it mediates the secretion of hemolysin. This chain is Hemolysin transporter protein ShlB (shlB), found in Serratia marcescens.